We begin with the raw amino-acid sequence, 412 residues long: Lipoyl synthase, mitochondrial (412 aa).

The transit peptide at 1–28 (MASIAPSLKRAHAPLRKALTASSTIRAF) directs the protein to the mitochondrion. 7 residues coordinate [4Fe-4S] cluster: Cys-124, Cys-129, Cys-135, Cys-155, Cys-159, Cys-162, and Ser-372. One can recognise a Radical SAM core domain in the interval 138 to 361 (GSDKNAATAT…NKRALDMGFL (224 aa)).

It belongs to the radical SAM superfamily. Lipoyl synthase family. [4Fe-4S] cluster serves as cofactor.

Its subcellular location is the mitochondrion. The enzyme catalyses [[Fe-S] cluster scaffold protein carrying a second [4Fe-4S](2+) cluster] + N(6)-octanoyl-L-lysyl-[protein] + 2 oxidized [2Fe-2S]-[ferredoxin] + 2 S-adenosyl-L-methionine + 4 H(+) = [[Fe-S] cluster scaffold protein] + N(6)-[(R)-dihydrolipoyl]-L-lysyl-[protein] + 4 Fe(3+) + 2 hydrogen sulfide + 2 5'-deoxyadenosine + 2 L-methionine + 2 reduced [2Fe-2S]-[ferredoxin]. It functions in the pathway protein modification; protein lipoylation via endogenous pathway; protein N(6)-(lipoyl)lysine from octanoyl-[acyl-carrier-protein]: step 2/2. Its function is as follows. Catalyzes the radical-mediated insertion of two sulfur atoms into the C-6 and C-8 positions of the octanoyl moiety bound to the lipoyl domains of lipoate-dependent enzymes, thereby converting the octanoylated domains into lipoylated derivatives. This chain is Lipoyl synthase, mitochondrial, found in Fusarium vanettenii (strain ATCC MYA-4622 / CBS 123669 / FGSC 9596 / NRRL 45880 / 77-13-4) (Fusarium solani subsp. pisi).